Consider the following 96-residue polypeptide: Probable RNA-binding protein YqeI (96 aa).

Residues 1-96 enclose the CRM domain; the sequence is MLTGKQKRFL…SKENKQIELP (96 aa).

The sequence is that of Probable RNA-binding protein YqeI (yqeI) from Bacillus subtilis (strain 168).